The primary structure comprises 403 residues: MAEKSTKNETALLVAQSAKSALQDFNHTYSKSWTFGDKWDNSNTMFETFVNKFLFPKINETLLIDIALGNRFNWLAKEQDFIGQYSEEYVIMDTVPINMDLSKNEELMLKRNYPRMATKLYGSGIVKKQKFTLNNNDTRFNFQTLADATNYALGVYKKKISDINVLEEKEMRAMLVDYSLNQLSESNVRKATSKQDLASKVFEAILNLQNNSAKYNEVHRASGGAIGQYTTVSKLKDIVILTTDSLKSYLLDTKIANTFQVAGIDFTDHVISFDDLGGVFKVTKDIVVSSDESVAFLRAYGDYQTHKGDTIPVGSVFTYDVSNLSEFKSNVEEIKPKSDLYAFILDINSIKYKRYTKGMLKQPFYNGEFDEVTHWIHYYSFKAISPFFNKILITDQDVTPRTE.

The protein resides in the virion. Its function is as follows. Assembles to form an icosahedral capsid. This is Major capsid protein from Staphylococcus aureus.